We begin with the raw amino-acid sequence, 219 residues long: UPF0173 metal-dependent hydrolase Mlab_1154 (219 aa).

It belongs to the UPF0173 family.

This is UPF0173 metal-dependent hydrolase Mlab_1154 from Methanocorpusculum labreanum (strain ATCC 43576 / DSM 4855 / Z).